Here is a 528-residue protein sequence, read N- to C-terminus: UDP-glucuronosyltransferase 2B30 (528 aa).

An N-terminal signal peptide occupies residues 1 to 23 (MSMKWTSALLLIQLSCYLSSGNC). At K135 the chain carries N6-succinyllysine. N315 is a glycosylation site (N-linked (GlcNAc...) asparagine). Residues 493–513 (VIGFLLACVATVIFIITKCLF) form a helical membrane-spanning segment.

This sequence belongs to the UDP-glycosyltransferase family. In terms of tissue distribution, expressed in several tissues, including prostate, testis, mammary gland, kidney, adrenals and intestine.

It is found in the microsome membrane. Its subcellular location is the endoplasmic reticulum membrane. The enzyme catalyses glucuronate acceptor + UDP-alpha-D-glucuronate = acceptor beta-D-glucuronoside + UDP + H(+). Functionally, UDPGTs are of major importance in the conjugation and subsequent elimination of potentially toxic xenobiotics and endogenous compounds. This isozyme has glucuronidating capacity on testosterone, dihydrotestosterone, 5-alpha-androstane-3-alpha,17-beta-diol, androsterone, oestradiol, tetrahydroaldosterone and tetrahydrocortisone. This enzyme is essential to inactivation of several steroids. The protein is UDP-glucuronosyltransferase 2B30 (UGT2B30) of Macaca fascicularis (Crab-eating macaque).